The primary structure comprises 299 residues: Probable lipid kinase YegS (299 aa).

One can recognise a DAGKc domain in the interval 2-133 (AEFPASLLIL…IDMAQVNKQT (132 aa)). Residues Thr-40, 66–72 (GDGTINE), and Thr-95 each bind ATP. 3 residues coordinate Mg(2+): Leu-215, Asp-218, and Leu-220. Glu-271 (proton acceptor) is an active-site residue.

Belongs to the diacylglycerol/lipid kinase family. YegS lipid kinase subfamily. The cofactor is Mg(2+). Ca(2+) is required as a cofactor.

It is found in the cytoplasm. In terms of biological role, probably phosphorylates lipids; the in vivo substrate is unknown. This is Probable lipid kinase YegS from Escherichia coli (strain K12 / MC4100 / BW2952).